A 286-amino-acid chain; its full sequence is Putative sugar uptake protein lmo0176 (286 aa).

Helical transmembrane passes span Met-4–Ser-26, Gly-33–Leu-55, Leu-114–Ala-136, Gly-149–Ile-167, Ala-177–His-194, Leu-207–Ala-226, Val-230–Ile-252, and Leu-264–Ala-283.

Belongs to the GRP transporter (TC 2.A.7.5) family.

It is found in the cell membrane. The protein is Putative sugar uptake protein lmo0176 of Listeria monocytogenes serovar 1/2a (strain ATCC BAA-679 / EGD-e).